Here is a 68-residue protein sequence, read N- to C-terminus: Tetrahydromethanopterin S-methyltransferase subunit F (68 aa).

Residues 45–65 form a helical membrane-spanning segment; it reads IAIGFLLAVLLVGVPAMMSIL.

The protein belongs to the MtrF family. As to quaternary structure, the complex is composed of 8 subunits; MtrA, MtrB, MtrC, MtrD, MtrE, MtrF, MtrG and MtrH.

The protein localises to the cell membrane. It carries out the reaction 5-methyl-5,6,7,8-tetrahydromethanopterin + coenzyme M + 2 Na(+)(in) = 5,6,7,8-tetrahydromethanopterin + methyl-coenzyme M + 2 Na(+)(out). It functions in the pathway one-carbon metabolism; methanogenesis from CO(2); methyl-coenzyme M from 5,10-methylene-5,6,7,8-tetrahydromethanopterin: step 2/2. In terms of biological role, part of a complex that catalyzes the formation of methyl-coenzyme M and tetrahydromethanopterin from coenzyme M and methyl-tetrahydromethanopterin. This is an energy-conserving, sodium-ion translocating step. The chain is Tetrahydromethanopterin S-methyltransferase subunit F (mtrF) from Methanothermobacter marburgensis (strain ATCC BAA-927 / DSM 2133 / JCM 14651 / NBRC 100331 / OCM 82 / Marburg) (Methanobacterium thermoautotrophicum).